Consider the following 87-residue polypeptide: Beta-mammal toxin Css4 (87 aa).

An N-terminal signal peptide occupies residues 1-19 (MNSLLMITACLALVGTVWA). Residues 20–85 (KEGYLVNSYT…VWPLPNKTCN (66 aa)) form the LCN-type CS-alpha/beta domain. 4 cysteine pairs are disulfide-bonded: Cys31–Cys84, Cys35–Cys60, Cys44–Cys65, and Cys48–Cys67. Asn85 carries the post-translational modification Asparagine amide.

The protein belongs to the long (4 C-C) scorpion toxin superfamily. Sodium channel inhibitor family. Beta subfamily. Expressed by the venom gland.

It localises to the secreted. Its function is as follows. Beta toxins bind voltage-independently at site-4 of sodium channels (Nav) and shift the voltage of activation toward more negative potentials thereby affecting sodium channel activation and promoting spontaneous and repetitive firing. This toxin is active only on mammals. This Centruroides suffusus (Durango bark scorpion) protein is Beta-mammal toxin Css4.